The following is a 708-amino-acid chain: Glycogen [starch] synthase isoform 1 (708 aa).

UDP is bound at residue R20. A Phosphoserine modification is found at S159. UDP-alpha-D-glucose-binding residues include H193 and R199. 5 residues coordinate alpha-D-glucose 6-phosphate: H280, E281, Q283, H286, and K290. R320 is a binding site for UDP. R320 contacts UDP-alpha-D-glucose. S363 is subject to Phosphoserine. H500 contacts alpha-D-glucose 6-phosphate. Residues E509, W511, and G512 each coordinate UDP-alpha-D-glucose. Position 514 (T514) interacts with UDP. S560 carries the phosphoserine modification. 2 residues coordinate alpha-D-glucose 6-phosphate: R583 and R587. Phosphoserine occurs at positions 651 and 655. Phosphoserine; by PKA occurs at positions 660 and 662. A disordered region spans residues S687 to N708. Positions D693–N708 are enriched in acidic residues.

Belongs to the glycosyltransferase 3 family.

The catalysed reaction is [(1-&gt;4)-alpha-D-glucosyl](n) + UDP-alpha-D-glucose = [(1-&gt;4)-alpha-D-glucosyl](n+1) + UDP + H(+). It functions in the pathway glycan biosynthesis; glycogen biosynthesis. With respect to regulation, allosteric activation by glucose-6-phosphate, and phosphorylation by a cAMP-dependent kinase. Its function is as follows. Glycogen synthase participates in the glycogen biosynthetic process along with glycogenin and glycogen branching enzyme. Extends the primer composed of a few glucose units formed by glycogenin by adding new glucose units to it. In this context, glycogen synthase transfers the glycosyl residue from UDP-Glc to the non-reducing end of alpha-1,4-glucan. This chain is Glycogen [starch] synthase isoform 1 (GSY1), found in Saccharomyces cerevisiae (strain ATCC 204508 / S288c) (Baker's yeast).